A 320-amino-acid polypeptide reads, in one-letter code: 2-oxoglutarate-dependent dioxygenase thnC (320 aa).

Positions 174–278 (PLVQMKLIRY…HSCATFWHGD (105 aa)) constitute a Fe2OG dioxygenase domain. Residues histidine 199, aspartate 201, and histidine 258 each coordinate Fe cation. Arginine 268 provides a ligand contact to 2-oxoglutarate.

Belongs to the iron/ascorbate-dependent oxidoreductase family. Requires Fe(2+) as cofactor.

It catalyses the reaction trihazone A + 2-oxoglutarate + O2 + H(+) = trihazone D + succinate + 2 CO2 + H2O. The protein operates within secondary metabolite biosynthesis. In terms of biological role, 2-oxoglutarate-dependent dioxygenase; part of the gene cluster that produces the tetronate natural products trihazones. ThnC catalyzes the oxidative decarboxylation of trihazone A to trihazone D. The C4 hydrogen is first abstracted by the iron-oxo species generated in ThnC to give a tertiary radical at C4. This is followed by decarboxylation and removal of the second electron by the FeIII-OH center to give trihazone D. The pathway begins with the formation of trihazone A by the hybrid PKS-NRPS synthetase thnA and the trans-enoyl reductase thnE. Trihazone A is further decarboxylated by the 2-oxoglutarate-dependent dioxygenase thnC to produce trihazone D. The function of the FAD-dependent monooxygenase thnD has still to be identified. In Trichoderma harzianum (Hypocrea lixii), this protein is 2-oxoglutarate-dependent dioxygenase thnC.